The sequence spans 173 residues: FMN reductase (NADH) RutF 2 (173 aa).

It belongs to the non-flavoprotein flavin reductase family. RutF subfamily.

It catalyses the reaction FMNH2 + NAD(+) = FMN + NADH + 2 H(+). Functionally, catalyzes the reduction of FMN to FMNH2 which is used to reduce pyrimidine by RutA via the Rut pathway. The protein is FMN reductase (NADH) RutF 2 of Rhizobium rhizogenes (strain K84 / ATCC BAA-868) (Agrobacterium radiobacter).